The sequence spans 232 residues: Clarin-2 (232 aa).

A run of 4 helical transmembrane segments spans residues 8-28 (VWYGLASLLSFSSFLLIIVAL), 101-121 (ILLLLFLALALALVSMGFAIL), 139-159 (LWNVLAGGVVALAIGSFMAAV), and 188-208 (SFWICVASASAHAANLVVVAI).

This sequence belongs to the clarin family. In terms of tissue distribution, detected in inner ear, particularly in hair bundles of auditory hair cells and is enriched in apical stereocilia. Detected in eye, but not in brain or muscle.

It localises to the cell projection. It is found in the stereocilium membrane. Plays a key role to hearing function. Required for normal organization and maintenance of the stereocilia bundle and for mechano-electrical transduction. The chain is Clarin-2 from Mus musculus (Mouse).